The chain runs to 230 residues: C-methyltransferase CouO (230 aa).

The protein belongs to the methyltransferase superfamily.

It participates in antibiotic biosynthesis. Functionally, mediates C-methylation at the 8-position of the aminocoumarin moieties in coumermycin A1 in the biosynthetic pathway of coumermycin antibiotic. Active on both mono- and bis-amides for mono- and di-C-methylation adjacent to the phenolic hydroxyl before it is glycosylated by CouM. The sequence is that of C-methyltransferase CouO (couO) from Streptomyces rishiriensis.